Reading from the N-terminus, the 438-residue chain is Thymidine phosphorylase (438 aa).

Belongs to the thymidine/pyrimidine-nucleoside phosphorylase family. Homodimer.

The catalysed reaction is thymidine + phosphate = 2-deoxy-alpha-D-ribose 1-phosphate + thymine. Its pathway is pyrimidine metabolism; dTMP biosynthesis via salvage pathway; dTMP from thymine: step 1/2. In terms of biological role, the enzymes which catalyze the reversible phosphorolysis of pyrimidine nucleosides are involved in the degradation of these compounds and in their utilization as carbon and energy sources, or in the rescue of pyrimidine bases for nucleotide synthesis. The chain is Thymidine phosphorylase from Sinorhizobium fredii (strain NBRC 101917 / NGR234).